An 88-amino-acid polypeptide reads, in one-letter code: Cell division topological specificity factor (88 aa).

It belongs to the MinE family.

Functionally, prevents the cell division inhibition by proteins MinC and MinD at internal division sites while permitting inhibition at polar sites. This ensures cell division at the proper site by restricting the formation of a division septum at the midpoint of the long axis of the cell. In Clostridium botulinum (strain Alaska E43 / Type E3), this protein is Cell division topological specificity factor.